A 946-amino-acid polypeptide reads, in one-letter code: Inter-alpha-trypsin inhibitor heavy chain H2 (946 aa).

A signal peptide spans 1-18; that stretch reads MKRLTCFFICFFLSEVSG. The propeptide occupies 19–54; sequence FEIPINGLSEFVDYEDLVELAPGKFQLVAENRRYQR. The VIT domain maps to 56-185; that stretch reads LPGESEEMME…KVQFELHYQE (130 aa). Phosphoserine; by FAM20C is present on Ser-60. An N-linked (GlcNAc...) (complex) asparagine glycan is attached at Asn-118. A disulfide bridge links Cys-261 with Cys-264. 4-carboxyglutamate is present on residues Glu-282 and Glu-283. Residues 308–468 enclose the VWFA domain; sequence PKNILFVIDV…YDFLKRLSNE (161 aa). A glycan (N-linked (GlcNAc...) asparagine) is linked at Asn-445. Ser-466 carries the post-translational modification Phosphoserine; by FAM20C. The cysteines at positions 650 and 651 are disulfide-linked. Residues 665–679 form an O-glycosylated at three sites region; sequence STPSWANPSPTPVIS. O-linked (GalNAc...) threonine; partial glycosylation is present at Thr-666. O-linked (GalNAc...) serine glycosylation occurs at Ser-673. O-linked (GalNAc...) threonine glycans are attached at residues Thr-675 and Thr-691. An Aspartate 1-(chondroitin 4-sulfate)-ester modification is found at Asp-702. Residues 703 to 946 constitute a propeptide that is removed on maturation; that stretch reads PHFIIYLPKS…PQLYSFLKRP (244 aa). Residue Ser-886 is modified to Phosphoserine; by FAM20C.

I-alpha-I plasma protease inhibitors are assembled from one or two heavy chains (HC) and one light chain, bikunin. Inter-alpha-inhibitor (I-alpha-I) is composed of ITIH1/HC1, ITIH2/HC2 and bikunin. Heavy chains are linked to bikunin via chondroitin 4-sulfate esterified to the alpha-carboxyl of the C-terminal aspartate after propeptide cleavage. Post-translationally, N- and O-glycosylated. O-glycosylated with core 1 or possibly core 8 glycans. In terms of processing, phosphorylated by FAM20C in the extracellular medium. As to expression, plasma.

The protein resides in the secreted. In terms of biological role, may act as a carrier of hyaluronan in serum or as a binding protein between hyaluronan and other matrix protein, including those on cell surfaces in tissues to regulate the localization, synthesis and degradation of hyaluronan which are essential to cells undergoing biological processes. The protein is Inter-alpha-trypsin inhibitor heavy chain H2 (ITIH2) of Homo sapiens (Human).